Consider the following 366-residue polypeptide: Major outer membrane protein (366 aa).

The signal sequence occupies residues 1–21 (MKKTLLATAIAGAMAASGAQA).

It belongs to the Gram-negative porin family. As to quaternary structure, homotrimer.

The protein localises to the cell outer membrane. The chain is Major outer membrane protein from Halomonas elongata (strain ATCC 33173 / DSM 2581 / NBRC 15536 / NCIMB 2198 / 1H9).